Here is a 52-residue protein sequence, read N- to C-terminus: Insulin (52 aa).

3 disulfide bridges follow: cysteine 7–cysteine 38, cysteine 19–cysteine 51, and cysteine 37–cysteine 42.

The protein belongs to the insulin family. Heterodimer of a B chain and an A chain linked by two disulfide bonds.

It localises to the secreted. Insulin decreases blood glucose concentration. It increases cell permeability to monosaccharides, amino acids and fatty acids. It accelerates glycolysis, the pentose phosphate cycle, and glycogen synthesis in liver. This Acipenser gueldenstaedtii (Russian sturgeon) protein is Insulin (ins).